The chain runs to 109 residues: Ribulose bisphosphate carboxylase small subunit (109 aa).

Belongs to the RuBisCO small chain family. Heterohexadecamer of 8 large and 8 small subunits. Forms complexes of many stoichiometries with Raf1 and RbcL.

It localises to the carboxysome. Functionally, ruBisCO catalyzes two reactions: the carboxylation of D-ribulose 1,5-bisphosphate, the primary event in carbon dioxide fixation, as well as the oxidative fragmentation of the pentose substrate in the photorespiration process. Both reactions occur simultaneously and in competition at the same active site. Although the small subunit is not catalytic it is essential for maximal activity. This Nostoc sp. (strain PCC 7120 / SAG 25.82 / UTEX 2576) protein is Ribulose bisphosphate carboxylase small subunit.